Here is a 419-residue protein sequence, read N- to C-terminus: Serine hydroxymethyltransferase (419 aa).

(6S)-5,6,7,8-tetrahydrofolate is bound by residues Leu-121 and 125-127; that span reads GHL. Lys-229 carries the post-translational modification N6-(pyridoxal phosphate)lysine.

The protein belongs to the SHMT family. Homodimer. Pyridoxal 5'-phosphate serves as cofactor.

Its subcellular location is the cytoplasm. The enzyme catalyses (6R)-5,10-methylene-5,6,7,8-tetrahydrofolate + glycine + H2O = (6S)-5,6,7,8-tetrahydrofolate + L-serine. Its pathway is one-carbon metabolism; tetrahydrofolate interconversion. It functions in the pathway amino-acid biosynthesis; glycine biosynthesis; glycine from L-serine: step 1/1. In terms of biological role, catalyzes the reversible interconversion of serine and glycine with tetrahydrofolate (THF) serving as the one-carbon carrier. This reaction serves as the major source of one-carbon groups required for the biosynthesis of purines, thymidylate, methionine, and other important biomolecules. Also exhibits THF-independent aldolase activity toward beta-hydroxyamino acids, producing glycine and aldehydes, via a retro-aldol mechanism. The protein is Serine hydroxymethyltransferase of Histophilus somni (strain 2336) (Haemophilus somnus).